The chain runs to 373 residues: Coiled-coil domain-containing protein 34 (373 aa).

2 disordered regions span residues 1 to 112 and 118 to 137; these read MWAA…SLRG and CAST…QVRL. Phosphoserine is present on serine 52. Residues 61-76 show a composition bias toward polar residues; that stretch reads NSTRSLLSPLGHQSFQ. The segment covering 77 to 101 has biased composition (acidic residues); sequence FDEDDGDGEDEEDVDDEEDVDEDAH. A coiled-coil region spans residues 152-286; it reads KEKEERDRLQ…QEWLENAKHK (135 aa). The interval 324 to 352 is disordered; the sequence is IHMPPPKEAKDLSGRKSKRPVISQPHKSS. Residues 328–337 are compositionally biased toward basic and acidic residues; sequence PPKEAKDLSG.

As to expression, expressed in sperm.

The protein localises to the cell projection. It localises to the cilium. It is found in the flagellum. In terms of biological role, involved in spermatogenesis. Has a probable role in anterograde intraflagellar transport which is essential for the formation of sperm flagella. This chain is Coiled-coil domain-containing protein 34 (CCDC34), found in Homo sapiens (Human).